Reading from the N-terminus, the 25-residue chain is Caerin-1.5 (25 aa).

Position 25 is a leucine amide (leucine 25).

Expressed by the skin parotoid and/or rostral glands.

It is found in the secreted. Its function is as follows. Antibacterial peptide, that adopts an alpha helical conformation which can disrupt bacterial membranes. Each caerin displays a different antimicrobial specificity. The chain is Caerin-1.5 from Ranoidea caerulea (Green tree frog).